The primary structure comprises 330 residues: Ribosomal RNA large subunit methyltransferase F (330 aa).

Belongs to the methyltransferase superfamily. METTL16/RlmF family.

The protein resides in the cytoplasm. The enzyme catalyses adenosine(1618) in 23S rRNA + S-adenosyl-L-methionine = N(6)-methyladenosine(1618) in 23S rRNA + S-adenosyl-L-homocysteine + H(+). Functionally, specifically methylates the adenine in position 1618 of 23S rRNA. This chain is Ribosomal RNA large subunit methyltransferase F, found in Pseudoalteromonas atlantica (strain T6c / ATCC BAA-1087).